We begin with the raw amino-acid sequence, 143 residues long: Transcriptional regulator MraZ (143 aa).

2 SpoVT-AbrB domains span residues 5 to 47 and 76 to 119; these read TYEP…SAEE and ASDE…DAAA.

The protein belongs to the MraZ family. As to quaternary structure, forms oligomers.

It localises to the cytoplasm. It is found in the nucleoid. This chain is Transcriptional regulator MraZ, found in Kocuria rhizophila (strain ATCC 9341 / DSM 348 / NBRC 103217 / DC2201).